Reading from the N-terminus, the 792-residue chain is Serine/threonine-protein kinase Nek4 (792 aa).

The Protein kinase domain occupies 6 to 261 (YCYMRVVGRG…VRSILRQPYI (256 aa)). Residues 12–20 (VGRGSYGEV) and Lys-35 each bind ATP. Asp-131 acts as the Proton acceptor in catalysis. Phosphothreonine; by autocatalysis is present on Thr-165. Disordered regions lie at residues 329 to 358 (QEKP…NTGE), 379 to 515 (ANAG…LPSY), 527 to 611 (QQND…SITQ), and 628 to 657 (LSED…TNEM). Ser-340 and Ser-343 each carry phosphoserine. 5 stretches are compositionally biased toward polar residues: residues 412-421 (QGNTKSSDQP), 456-467 (DQVTGIIENQDS), 473-484 (QPHSSMSEPSLS), 496-505 (AHSGTKSQFQ), and 541-551 (VNSSRTSSTAS). Lys-566 is subject to N6-methyllysine. Over residues 602 to 611 (RFSSDCSITQ) the composition is skewed to polar residues. The span at 641–657 (DKSDGDSREGKSHTNEM) shows a compositional bias: basic and acidic residues. Position 675 is a phosphoserine (Ser-675).

Belongs to the protein kinase superfamily. NEK Ser/Thr protein kinase family. NIMA subfamily. Requires Mn(2+) as cofactor. Expressed ubiquitously among various organs and is up-regulated in the testis.

The protein resides in the cytoplasm. It localises to the cell projection. It is found in the cilium. It catalyses the reaction L-seryl-[protein] + ATP = O-phospho-L-seryl-[protein] + ADP + H(+). It carries out the reaction L-threonyl-[protein] + ATP = O-phospho-L-threonyl-[protein] + ADP + H(+). Functionally, required for normal entry into proliferative arrest after a limited number of cell divisions, also called replicative senescence. Required for normal cell cycle arrest in response to double-stranded DNA damage. Protein kinase that seems to act exclusively upon threonine residues. In Mus musculus (Mouse), this protein is Serine/threonine-protein kinase Nek4 (Nek4).